The primary structure comprises 258 residues: 5'-nucleotidase SurE (258 aa).

4 residues coordinate a divalent metal cation: Asp9, Asp10, Ser42, and Asn96.

The protein belongs to the SurE nucleotidase family. A divalent metal cation serves as cofactor.

It localises to the cytoplasm. The enzyme catalyses a ribonucleoside 5'-phosphate + H2O = a ribonucleoside + phosphate. In terms of biological role, nucleotidase that shows phosphatase activity on nucleoside 5'-monophosphates. The sequence is that of 5'-nucleotidase SurE from Campylobacter jejuni subsp. doylei (strain ATCC BAA-1458 / RM4099 / 269.97).